A 354-amino-acid polypeptide reads, in one-letter code: Phosphate acyltransferase (354 aa).

This sequence belongs to the PlsX family. As to quaternary structure, homodimer. Probably interacts with PlsY.

The protein resides in the cytoplasm. The enzyme catalyses a fatty acyl-[ACP] + phosphate = an acyl phosphate + holo-[ACP]. It functions in the pathway lipid metabolism; phospholipid metabolism. Its function is as follows. Catalyzes the reversible formation of acyl-phosphate (acyl-PO(4)) from acyl-[acyl-carrier-protein] (acyl-ACP). This enzyme utilizes acyl-ACP as fatty acyl donor, but not acyl-CoA. In Bordetella petrii (strain ATCC BAA-461 / DSM 12804 / CCUG 43448), this protein is Phosphate acyltransferase.